The chain runs to 107 residues: Circadian clock oscillator protein KaiB (107 aa).

This sequence belongs to the KaiB family. As to quaternary structure, may undergo a major conformational rearrangment; in the free state forms homooligomers. When bound to KaiC switches to a monomeric thioredoxin-fold (KaiB(fs)). The active oscillator complex is probably KaiC(6):KaiB(6).

In terms of biological role, component of the KaiBC clock protein complex, which constitutes the main circadian regulator in cyanobacteria; it may modify the ATPase activity of KaiC. May be a metamorphic protein which reversibly switches between an inactive tetrameric fold and a rare, thioredoxin-like monomeric fold (KaiB(fs)). KaiB(fs) binds phospho-KaiC, and perhaps clock output effectors. The polypeptide is Circadian clock oscillator protein KaiB (Prochlorococcus marinus (strain NATL2A)).